The chain runs to 308 residues: tRNA pseudouridine synthase B (308 aa).

Residue Asp-47 is the Nucleophile of the active site.

It belongs to the pseudouridine synthase TruB family. Type 1 subfamily.

It catalyses the reaction uridine(55) in tRNA = pseudouridine(55) in tRNA. Responsible for synthesis of pseudouridine from uracil-55 in the psi GC loop of transfer RNAs. This chain is tRNA pseudouridine synthase B, found in Xanthomonas euvesicatoria pv. vesicatoria (strain 85-10) (Xanthomonas campestris pv. vesicatoria).